The primary structure comprises 47 residues: Gas vesicle protein A (47 aa).

This sequence belongs to the gas vesicle GvpA family. As to quaternary structure, the gas vesicle shell is 2 nm thick and consists of a single layer of this protein. It forms helical ribs nearly perpendicular to the long axis of the vesicle.

It localises to the gas vesicle shell. Gas vesicles are hollow, gas filled proteinaceous nanostructures found in some microorganisms. During planktonic growth they allow positioning of the organism at a favorable depth for light or nutrient acquisition. GvpA forms the protein shell. The chain is Gas vesicle protein A from Dactylococcopsis salina (Myxobaktron salinum).